The sequence spans 92 residues: Large ribosomal subunit protein bL27 (92 aa).

The disordered stretch occupies residues 1-26; that stretch reads MAHKKGASSSSNGRDSESKRLGVKRF.

The protein belongs to the bacterial ribosomal protein bL27 family.

The protein is Large ribosomal subunit protein bL27 of Corynebacterium aurimucosum (strain ATCC 700975 / DSM 44827 / CIP 107346 / CN-1) (Corynebacterium nigricans).